A 199-amino-acid chain; its full sequence is NADH-quinone oxidoreductase subunit C (199 aa).

Belongs to the complex I 30 kDa subunit family. NDH-1 is composed of 14 different subunits. Subunits NuoB, C, D, E, F, and G constitute the peripheral sector of the complex.

Its subcellular location is the cell inner membrane. The catalysed reaction is a quinone + NADH + 5 H(+)(in) = a quinol + NAD(+) + 4 H(+)(out). Functionally, NDH-1 shuttles electrons from NADH, via FMN and iron-sulfur (Fe-S) centers, to quinones in the respiratory chain. The immediate electron acceptor for the enzyme in this species is believed to be ubiquinone. Couples the redox reaction to proton translocation (for every two electrons transferred, four hydrogen ions are translocated across the cytoplasmic membrane), and thus conserves the redox energy in a proton gradient. This chain is NADH-quinone oxidoreductase subunit C, found in Roseobacter denitrificans (strain ATCC 33942 / OCh 114) (Erythrobacter sp. (strain OCh 114)).